A 501-amino-acid polypeptide reads, in one-letter code: Aspartyl/glutamyl-tRNA(Asn/Gln) amidotransferase subunit B (501 aa).

Belongs to the GatB/GatE family. GatB subfamily. Heterotrimer of A, B and C subunits.

The catalysed reaction is L-glutamyl-tRNA(Gln) + L-glutamine + ATP + H2O = L-glutaminyl-tRNA(Gln) + L-glutamate + ADP + phosphate + H(+). It carries out the reaction L-aspartyl-tRNA(Asn) + L-glutamine + ATP + H2O = L-asparaginyl-tRNA(Asn) + L-glutamate + ADP + phosphate + 2 H(+). Functionally, allows the formation of correctly charged Asn-tRNA(Asn) or Gln-tRNA(Gln) through the transamidation of misacylated Asp-tRNA(Asn) or Glu-tRNA(Gln) in organisms which lack either or both of asparaginyl-tRNA or glutaminyl-tRNA synthetases. The reaction takes place in the presence of glutamine and ATP through an activated phospho-Asp-tRNA(Asn) or phospho-Glu-tRNA(Gln). This Agrobacterium fabrum (strain C58 / ATCC 33970) (Agrobacterium tumefaciens (strain C58)) protein is Aspartyl/glutamyl-tRNA(Asn/Gln) amidotransferase subunit B.